Consider the following 407-residue polypeptide: Peptidase T (407 aa).

Position 81 (His81) interacts with Zn(2+). Asp83 is a catalytic residue. Asp142 provides a ligand contact to Zn(2+). Residue Glu176 is the Proton acceptor of the active site. Zn(2+)-binding residues include Glu177, Asp199, and His381.

The protein belongs to the peptidase M20B family. It depends on Zn(2+) as a cofactor.

Its subcellular location is the cytoplasm. It carries out the reaction Release of the N-terminal residue from a tripeptide.. Functionally, cleaves the N-terminal amino acid of tripeptides. This is Peptidase T from Streptococcus pneumoniae (strain P1031).